A 254-amino-acid chain; its full sequence is Serotonin N-acetyltransferase 1, chloroplastic (254 aa).

The transit peptide at 1-74 directs the protein to the chloroplast; it reads MAPAASASAS…LRSGFLKSNN (74 aa). The 144-residue stretch at 111–254 folds into the N-acetyltransferase domain; sequence IIFSSAGDVN…IKGMFWYPRF (144 aa).

The protein belongs to the acetyltransferase family. Expressed in roots and shoots.

The protein resides in the plastid. The protein localises to the chloroplast. It is found in the nucleus. The enzyme catalyses serotonin + acetyl-CoA = N-acetylserotonin + CoA + H(+). It carries out the reaction tyramine + acetyl-CoA = N-acetyltyramine + CoA + H(+). It catalyses the reaction tryptamine + acetyl-CoA = N-acetyltryptamine + CoA + H(+). The catalysed reaction is 5-methoxytryptamine + acetyl-CoA = melatonin + CoA + H(+). Its pathway is aromatic compound metabolism; melatonin biosynthesis; melatonin from serotonin: step 1/2. In terms of biological role, catalyzes the N-acetylation of serotonin into N-acetylserotonin, the penultimate step in the synthesis of melatonin. Catalyzes in vitro the N-acetylation of tryptamine to produce N-acetyltryptamine, 5-methoxytryptamine to produce melatonin and tyramine to produce N-acetyltyramine. In Oryza sativa subsp. japonica (Rice), this protein is Serotonin N-acetyltransferase 1, chloroplastic.